A 458-amino-acid polypeptide reads, in one-letter code: Elongation factor 1-alpha (458 aa).

Residue Gly-2 is modified to N,N,N-trimethylglycine. The residue at position 3 (Lys-3) is an N6,N6-dimethyllysine; alternate. At Lys-3 the chain carries N6-methyllysine; alternate. In terms of domain architecture, tr-type G spans 5 to 240 (KTHVNVVVIG…DAIEPPVRPS (236 aa)). The tract at residues 14–21 (GHVDSGKS) is G1. 14 to 21 (GHVDSGKS) lines the GTP pocket. At Lys-30 the chain carries N6-methyllysine. The G2 stretch occupies residues 70 to 74 (GITID). Lys-79 is subject to N6,N6,N6-trimethyllysine. Residues 91–94 (DAPG) form a G3 region. GTP-binding positions include 91–95 (DAPGH) and 153–156 (NKMD). The tract at residues 153–156 (NKMD) is G4. The G5 stretch occupies residues 192–194 (SGW). The residue at position 316 (Lys-316) is an N6,N6-dimethyllysine; alternate. Lys-316 carries the N6-methyllysine; alternate modification. Lys-390 carries the post-translational modification N6-methyllysine.

Belongs to the TRAFAC class translation factor GTPase superfamily. Classic translation factor GTPase family. EF-Tu/EF-1A subfamily.

Its subcellular location is the cytoplasm. This protein promotes the GTP-dependent binding of aminoacyl-tRNA to the A-site of ribosomes during protein biosynthesis. The polypeptide is Elongation factor 1-alpha (TEF-2) (Mucor circinelloides f. lusitanicus (Mucor racemosus var. lusitanicus)).